Reading from the N-terminus, the 759-residue chain is MSERMTPRLFPVSLLIGLLAGCATTPPPDVRRDARLDPQVGAAGATQTTAEQRADGNASAKPTPVIRRGSGTMINQSAAAAPSPTLGMASSGSATFNFEGESVQAVVKAILGDMLGQNYVIAPGVQGTVTLATPNPVSPAQALNLLEMVLGWNNARMVFSGGRYNIVPADQALAGTVAPSTASPSAARGFEVRVVPLKYISASEMKKVLEPYARPNAIVGTDASRNVITLGGTRAELENYLRTVQIFDVDWLSGMSVGVFPIQSGKAEKISADLEKVFGEQSKTPSAGMFRFMPLENANAVLVITPQPRYLDQIQQWLDRIDSAGGGVRLFSYELKYIKAKDLADRLSEVFGGRGNGGNSGPSLVPGGVVNMLGNNSGGADRDESLGSSSGATGGDIGGTSNGSSQSGTSGSFGGSSGSGMLQLPPSTNQNGSVTLEVEGDKVGVSAVAETNTLLVRTSAQAWKSIRDVIEKLDVMPMQVHIEAQIAEVTLTGRLQYGVNWYFENAVTTPSNADGSGGPNLPSAAGRGIWGDVSGSVTSNGVAWTFLGKNAAAIISALDQVTNLRLLQTPSVFVRNNAEATLNVGSRIPINSTSINTGLGSDSSFSSVQYIDTGVILKVRPRVTKDGMVFLDIVQEVSTPGARPAACTAAATTTVNSAACNVDINTRRVKTEAAVQNGDTIMLAGLIDDSTTDGSNGIPFLSKLPVVGALFGRKTQNSDRREVIVLITPSIVRNPQDARDLTDEYGSKFKSMRPMDVHK.

The first 21 residues, 1 to 21 (MSERMTPRLFPVSLLIGLLAG), serve as a signal peptide directing secretion. Cysteine 22 carries N-palmitoyl cysteine lipidation. Cysteine 22 is lipidated: S-diacylglycerol cysteine. Positions 40-51 (VGAAGATQTTAE) are enriched in low complexity. Residues 40–69 (VGAAGATQTTAEQRADGNASAKPTPVIRRG) form a disordered region. An N0 region spans residues 92–187 (GSATFNFEGE…APSTASPSAA (96 aa)). The tract at residues 189–253 (GFEVRVVPLK…VQIFDVDWLS (65 aa)) is N1. Residues 254 to 323 (GMSVGVFPIQ…IQQWLDRIDS (70 aa)) are N2. The segment at 326–474 (GGVRLFSYEL…SIRDVIEKLD (149 aa)) is N3. A disordered region spans residues 352–434 (GGRGNGGNSG…PPSTNQNGSV (83 aa)). Residues 392 to 401 (ATGGDIGGTS) show a composition bias toward gly residues. Residues 425–434 (PPSTNQNGSV) are compositionally biased toward polar residues. Positions 479-734 (QVHIEAQIAE…VLITPSIVRN (256 aa)) are secretin. Positions 736 to 759 (QDARDLTDEYGSKFKSMRPMDVHK) are s domain.

It belongs to the bacterial secretin family. GSP D subfamily. As to quaternary structure, forms a cylindrical channel with 15 subunits. Binds to XpsN.

The protein resides in the cell outer membrane. Involved in a type II secretion system (T2SS, formerly general secretion pathway, GSP) for the export of proteins. This subunit forms the outer membrane channel. This chain is Secretin XpsD (xpsD), found in Xanthomonas campestris pv. campestris (strain ATCC 33913 / DSM 3586 / NCPPB 528 / LMG 568 / P 25).